Reading from the N-terminus, the 75-residue chain is Putative defensin-like protein 119 (75 aa).

An N-terminal signal peptide occupies residues 1–25 (MAKSTIFAIFMIVFVLGMVTKETKG). 4 disulfides stabilise this stretch: C29-C73, C39-C58, C44-C67, and C48-C69.

The protein belongs to the DEFL family.

It is found in the secreted. The protein is Putative defensin-like protein 119 (LCR53) of Arabidopsis thaliana (Mouse-ear cress).